The sequence spans 440 residues: Cell division protein FtsA (440 aa).

The segment at 396-440 is disordered; sequence VSSSEEQEQHHHQNEVQQRPKGKQKTQAEHNKQSKMKKLLSMFWE.

The protein belongs to the FtsA/MreB family. Homodimer. Interacts with FtsZ.

Its subcellular location is the cell membrane. In terms of biological role, cell division protein that is required for the assembly of the Z ring. May serve as a membrane anchor for the Z ring. Binds and hydrolyzes ATP. Also involved in sporulation. The chain is Cell division protein FtsA from Bacillus subtilis (strain 168).